The sequence spans 635 residues: Chaperone protein HtpG (635 aa).

Positions 1–343 are a; substrate-binding; sequence MTAEATVETR…SNDLSLNVSR (343 aa). The interval 344–560 is b; sequence EILQQDPNID…EHDMGAQMRR (217 aa). The tract at residues 561–635 is c; it reads LLEAAGQAVP…LNKLLLELSN (75 aa).

This sequence belongs to the heat shock protein 90 family. As to quaternary structure, homodimer.

The protein resides in the cytoplasm. Molecular chaperone. Has ATPase activity. In Saccharophagus degradans (strain 2-40 / ATCC 43961 / DSM 17024), this protein is Chaperone protein HtpG.